The chain runs to 172 residues: MLVVLFTAVLLTLSYAQEPGDELQILDQTPNQKPPPPGFPPRPPANGSQQGPPPQGGPQQSPLQPGKPQDPPPQGSPQQKPPQPGKPQGPPPPGGPQKKPPQPGKPQGPPPPGGPQKKPPQPGKPQGPTPPGGPQQKPPQAGKPQGPPPPGGPQQKPPQPGNQQGPPPPGGP.

Positions 1–16 are cleaved as a signal peptide; it reads MLVVLFTAVLLTLSYA. Residues 22–172 form a disordered region; sequence ELQILDQTPN…QQGPPPPGGP (151 aa). A compositionally biased stretch (pro residues) spans 32–44; the sequence is QKPPPPGFPPRPP. Low complexity predominate over residues 57-67; sequence GPQQSPLQPGK. 2 stretches are compositionally biased toward pro residues: residues 68 to 137 and 145 to 172; these read PQDP…PQQK and QGPP…PGGP.

The protein localises to the secreted. This chain is Acidic proline-rich protein PRP25, found in Rattus norvegicus (Rat).